The primary structure comprises 235 residues: Protein MAINTENANCE OF PSII UNDER HIGH LIGHT 1 (235 aa).

Residues 127-147 (TAAIVAGIALIAVAAASSILL) traverse the membrane as a helical segment. A disordered region spans residues 181–235 (QPSTPSVTEAPPVAELETSLPETPSVAQQETSLPETMASEAQPEASSVPTTSSTS). Composition is skewed to polar residues over residues 200–214 (LPET…TSLP) and 224–235 (EASSVPTTSSTS).

As to quaternary structure, interacts with psbA, psbB, psbC and psbD.

The protein resides in the plastid. The protein localises to the chloroplast thylakoid membrane. Functionally, interacts with photosystem II (PSII) core complexes and participates in the maintenance of normal PSII activity under photoinhibitory stress. May protect against photodamage or stabilize PSII under high-light stress. Participates in the maintainance of proper PSII function under high-light stress by protecting PSII from photooxidative damage. This Arabidopsis thaliana (Mouse-ear cress) protein is Protein MAINTENANCE OF PSII UNDER HIGH LIGHT 1.